Here is a 321-residue protein sequence, read N- to C-terminus: Phospho-N-acetylmuramoyl-pentapeptide-transferase (321 aa).

The next 10 membrane-spanning stretches (helical) occupy residues A6–G26, G50–V70, L82–I102, L118–P138, F143–V163, I175–W195, Y200–N220, I226–M246, W251–V271, and I301–W321.

This sequence belongs to the glycosyltransferase 4 family. MraY subfamily. Mg(2+) serves as cofactor.

It localises to the cell membrane. The catalysed reaction is UDP-N-acetyl-alpha-D-muramoyl-L-alanyl-gamma-D-glutamyl-L-lysyl-D-alanyl-D-alanine + di-trans,octa-cis-undecaprenyl phosphate = Mur2Ac(oyl-L-Ala-gamma-D-Glu-L-Lys-D-Ala-D-Ala)-di-trans,octa-cis-undecaprenyl diphosphate + UMP. It functions in the pathway cell wall biogenesis; peptidoglycan biosynthesis. Functionally, catalyzes the initial step of the lipid cycle reactions in the biosynthesis of the cell wall peptidoglycan: transfers peptidoglycan precursor phospho-MurNAc-pentapeptide from UDP-MurNAc-pentapeptide onto the lipid carrier undecaprenyl phosphate, yielding undecaprenyl-pyrophosphoryl-MurNAc-pentapeptide, known as lipid I. The sequence is that of Phospho-N-acetylmuramoyl-pentapeptide-transferase from Enterococcus hirae.